Consider the following 359-residue polypeptide: CCAAT/enhancer-binding protein alpha (359 aa).

Positions 1 to 55 are disordered; it reads MESADFYEVEPRPPMSSHLQSPPHAPSNAAFGFPRGAGPAPPPAPPAAPEPLGGI. Residues 1-70 are required to repress E2F1:TFDP1-mediated transcription, to inhibit cell cycle and to induce adipocyte differentiation; that stretch reads MESADFYEVE…SIDISAYIDP (70 aa). Residues 29-38 are compositionally biased toward low complexity; it reads AAFGFPRGAG. Positions 39–49 are enriched in pro residues; the sequence is PAPPPAPPAAP. The segment at 54 to 72 is required for interaction with TRIB1; the sequence is GICEHETSIDISAYIDPAA. The tract at residues 126–200 is required to induce adipocyte differentiation; the sequence is PPGYGCAAAG…HASPAHLAAP (75 aa). Lys159 carries the N6-acetyllysine; alternate modification. Lys159 participates in a covalent cross-link: Glycyl lysine isopeptide (Lys-Gly) (interchain with G-Cter in SUMO); alternate. A Glycyl lysine isopeptide (Lys-Gly) (interchain with G-Cter in SUMO2); alternate cross-link involves residue Lys159. Disordered regions lie at residues 176–195 and 213–293; these read LFPY…ASPA and TMHL…RERN. Positions 179-191 are enriched in pro residues; sequence YQPPPPPPPPHPH. Residues 180-194 are required to functionally cooperate with SREBF1 in promoter activation; that stretch reads QPPPPPPPPHPHASP. Ser193 carries the post-translational modification Phosphoserine. A compositionally biased stretch (pro residues) spans 220–232; the sequence is HPTPPPTPVPSPH. Phosphothreonine; by GSK3 is present on residues Thr222 and Thr226. Ser230 bears the Phosphoserine; by GSK3 mark. Positions 233–255 are enriched in low complexity; it reads AAPALGAAGLPGPGSALKGLAGA. The tract at residues 240–359 is interaction with FOXO1; it reads AGLPGPGSAL…SLVKAMGNCA (120 aa). The segment covering 261–272 has biased composition (gly residues); the sequence is TGGGGGGSGAGA. Positions 277 to 293 are enriched in basic and acidic residues; it reads KSVDKNSNEYRVRRERN. A bZIP domain is found at 283 to 346; the sequence is SNEYRVRRER…DTLRGIFRQL (64 aa). A DNA-binding region spans residues 286–301; that stretch reads YRVRRERNNIAVRKSR. The segment at 287–314 is basic motif; the sequence is RVRRERNNIAVRKSRDKAKQRNVETQQK. The segment at 318 to 346 is leucine-zipper; it reads LTSDNDRLRKRVEQLSRELDTLRGIFRQL.

The protein belongs to the bZIP family. C/EBP subfamily. Binds DNA as a homodimer and as a heterodimer. Can form stable heterodimers with CEBPB, CEBPD, CEBPE and CEBPG. Interacts with PRDM16. Interacts with UBN1. Interacts with ZNF638; this interaction increases transcriptional activation. Interacts with the complex TFDP2:E2F1; the interaction prevents CEBPA binding to target gene promoters and represses its transcriptional activity. Interacts with RB1. Interacts (when phosphorylated at Ser-193) with CDK2, CDK4, E2F4 and SMARCA2. Interacts with SREBPF1. Interacts with FOXO1 (via the Fork-head domain); the interaction increases when FOXO1 is deacetylated. Interacts with SIX1. Interacts (via recognition sequence) with TRIB1. Interacts (via bZIP domain) with OVOL2 (via zinc-finger domains); the interaction inhibits the transcription factor activity of CEBPA and is required to repress adipogenesis. As to quaternary structure, interacts with TAF1A and UBTF. In terms of assembly, interacts with TAF1A and UBTF. Interacts with NPM1. Sumoylated, sumoylation blocks the inhibitory effect on cell proliferation by disrupting the interaction with SMARCA2. In terms of processing, phosphorylation at Ser-193 is required for interaction with CDK2, CDK4 and SWI/SNF complex leading to cell cycle inhibition. Dephosphorylated at Ser-193 by protein phosphatase 2A (PP2A) through PI3K/AKT signaling pathway regulation. Phosphorylation at Thr-222 and Thr-226 by GSK3 is constitutive in adipose tissue and lung. In liver, both Thr-222 and Thr-226 are phosphorylated only during feeding but not during fasting. Phosphorylation of the GSK3 consensus sites selectively decreases transactivation activity on IRE-controlled promoters. Post-translationally, ubiquitinated by COP1 upon interaction with TRIB1. As to expression, isoform 2 and isoform 3 are expressed in adipose tissue and liver (at protein level).

Its subcellular location is the nucleus. The protein localises to the nucleolus. Functionally, transcription factor that coordinates proliferation arrest and the differentiation of myeloid progenitors, adipocytes, hepatocytes, and cells of the lung and the placenta. Binds directly to the consensus DNA sequence 5'-T[TG]NNGNAA[TG]-3' acting as an activator on distinct target genes. During early embryogenesis, plays essential and redundant functions with CEBPB. Essential for the transition from common myeloid progenitors (CMP) to granulocyte/monocyte progenitors (GMP). Critical for the proper development of the liver and the lung. Necessary for terminal adipocyte differentiation, is required for postnatal maintenance of systemic energy homeostasis and lipid storage. To regulate these different processes at the proper moment and tissue, interplays with other transcription factors and modulators. Down-regulates the expression of genes that maintain cells in an undifferentiated and proliferative state through E2F1 repression, which is critical for its ability to induce adipocyte and granulocyte terminal differentiation. Reciprocally E2F1 blocks adipocyte differentiation by binding to specific promoters and repressing CEBPA binding to its target gene promoters. Proliferation arrest also depends on a functional binding to SWI/SNF complex. In liver, regulates gluconeogenesis and lipogenesis through different mechanisms. To regulate gluconeogenesis, functionally cooperates with FOXO1 binding to IRE-controlled promoters and regulating the expression of target genes such as PCK1 or G6PC1. To modulate lipogenesis, interacts and transcriptionally synergizes with SREBF1 in promoter activation of specific lipogenic target genes such as ACAS2. In adipose tissue, seems to act as FOXO1 coactivator accessing to ADIPOQ promoter through FOXO1 binding sites. Its function is as follows. Can act as dominant-negative. Binds DNA and have transctivation activity, even if much less efficiently than isoform 2. Does not inhibit cell proliferation. Directly and specifically enhances ribosomal DNA transcription interacting with RNA polymerase I-specific cofactors and inducing histone acetylation. This chain is CCAAT/enhancer-binding protein alpha, found in Mus musculus (Mouse).